Reading from the N-terminus, the 349-residue chain is Transmembrane protein 255A (349 aa).

4 consecutive transmembrane segments (helical) span residues 30–50, 57–77, 89–109, and 226–246; these read IYVT…GLAA, VTVG…LGII, LVAS…CAIV, and TILN…LGGF. A disordered region spans residues 301–329; it reads VFPSSPPSGLSDEPQSASPSPSYMWSSSA. A compositionally biased stretch (low complexity) spans 316–329; the sequence is SASPSPSYMWSSSA.

This sequence belongs to the TMEM255 family.

Its subcellular location is the membrane. The chain is Transmembrane protein 255A (TMEM255A) from Macaca fascicularis (Crab-eating macaque).